The following is a 706-amino-acid chain: Solute carrier organic anion transporter family member 6C1 (706 aa).

Residues 1-24 (MAHVRNKKSDDKKAMVVAKEDTNK) are disordered. Residues 1–94 (MAHVRNKKSD…PFVQRFNNID (94 aa)) are Cytoplasmic-facing. Positions 7–24 (KKSDDKKAMVVAKEDTNK) are enriched in basic and acidic residues. The chain crosses the membrane as a helical span at residues 95-118 (GFMTLYVAAVLIHGALFAVVDMTL). The Extracellular portion of the chain corresponds to 119–130 (NIYQVQFSLTRT). The helical transmembrane segment at 131–151 (EWYLMDFSDYIASFVVAIIIA) threads the bilayer. The Cytoplasmic portion of the chain corresponds to 152–159 (HFGSKGNR). A helical transmembrane segment spans residues 160 to 180 (TRWIAASCILMGLESMLFAFP). Over 181–218 (FFTYEIIIPGRQSIELCMEENEKRNIICGNSVPNRSKC) the chain is Extracellular. The N-linked (GlcNAc...) asparagine glycan is linked to asparagine 214. Residues 219-241 (IYFHIAGQCIHGIAGMPIYILGI) traverse the membrane as a helical segment. Residues 242–253 (TFIFDHIPTSSC) are Cytoplasmic-facing. A helical membrane pass occupies residues 254–277 (GFYLAIGHSAYLIGYLLGMVGGLQ). At 278–301 (NFQPPPKEKTVEIEPAKVYQLLQS) the chain is on the extracellular side. A helical transmembrane segment spans residues 302–324 (GWWKTFLIIAAISFCVSFMMVCF). The Cytoplasmic portion of the chain corresponds to 325–374 (PTSLPGAHKLRLAKRKEPPTIDRRLKDMKIQPHLKGFLHNIWHILKNPLM). Residues 375–396 (LTQAICKVSEYLTFNTSLYFLP) form a helical membrane-spanning segment. The Extracellular portion of the chain corresponds to 397 to 410 (HHLQTQFLITPGIA). A helical membrane pass occupies residues 411–432 (SLLTGAFVLPGGIIGHFLGGLI). Over 433 to 445 (VDRLEMTNKNKLK) the chain is Cytoplasmic. A helical membrane pass occupies residues 446–466 (FTLVTTVVSVGLFLLIFFVEC). The Extracellular segment spans residues 467 to 565 (QTTTFAGINE…IAGTCDSDCL (99 aa)). The region spanning 485–540 (GNLTADCNEYCDCTTSLYTSICGRDEKEYFSPCFAGCKATKVSQTEKTYYNCSCIK) is the Kazal-like domain. N-linked (GlcNAc...) asparagine glycosylation is present at asparagine 486. 3 disulfide bridges follow: cysteine 491–cysteine 521, cysteine 497–cysteine 517, and cysteine 506–cysteine 538. N-linked (GlcNAc...) asparagine glycosylation occurs at asparagine 535. A helical transmembrane segment spans residues 566 to 589 (KLPLFFAFYFSATVFSNMCSIPVI). The Cytoplasmic segment spans residues 590–604 (SIILQSVPANFTSLS). A helical transmembrane segment spans residues 605-624 (LGVTYAIVKFVASVPAPLLF). The Extracellular portion of the chain corresponds to 625-652 (RLSSAIACIYWDNNRCGGKERCWIYNKN). A helical membrane pass occupies residues 653 to 675 (ILVYEFMGIWMSSQLIIVLLNIY). At 676-706 (AIQIHDVVVHGEITESKTTVKDVKEQKERKA) the chain is on the cytoplasmic side.

Belongs to the organo anion transporter (TC 2.A.60) family. Component of the CatSper complex or CatSpermasome composed of the core pore-forming members CATSPER1, CATSPER2, CATSPER3 and CATSPER4 as well as auxiliary members CATSPERB, CATSPERG2, CATSPERD, CATSPERE, CATSPERZ, C2CD6/CATSPERT, SLCO6C1, TMEM249, TMEM262 and EFCAB9. HSPA1 may be an additional auxiliary complex member. The core complex members CATSPER1, CATSPER2, CATSPER3 and CATSPER4 form a heterotetrameric channel. The auxiliary CATSPERB, CATSPERG2, CATSPERD and CATSPERE subunits form a pavilion-like structure over the pore which stabilizes the complex through interactions with CATSPER4, CATSPER3, CATSPER1 and CATSPER2 respectively. SLCO6C1 interacts with CATSPERE and TMEM262/CATSPERH interacts with CATSPERB, further stabilizing the complex. C2CD6/CATSPERT interacts at least with CATSPERD and is required for targeting the CatSper complex in the flagellar membrane.

The protein resides in the cell projection. Its subcellular location is the cilium. It is found in the flagellum membrane. In terms of biological role, auxiliary component of the CatSper complex, a complex involved in sperm cell hyperactivation. The protein is Solute carrier organic anion transporter family member 6C1 of Mus musculus (Mouse).